The following is a 314-amino-acid chain: 2,3-dihydroxyphenylpropionate/2,3-dihydroxicinnamic acid 1,2-dioxygenase (314 aa).

H115 serves as the catalytic Proton donor. H179 acts as the Proton acceptor in catalysis.

Belongs to the LigB/MhpB extradiol dioxygenase family. In terms of assembly, homotetramer. Fe(2+) serves as cofactor.

It catalyses the reaction 3-(2,3-dihydroxyphenyl)propanoate + O2 = (2Z,4E)-2-hydroxy-6-oxonona-2,4-dienedioate + H(+). It carries out the reaction (2E)-3-(2,3-dihydroxyphenyl)prop-2-enoate + O2 = (2Z,4E,7E)-2-hydroxy-6-oxonona-2,4,7-trienedioate + H(+). It functions in the pathway aromatic compound metabolism; 3-phenylpropanoate degradation. Its function is as follows. Catalyzes the non-heme iron(II)-dependent oxidative cleavage of 2,3-dihydroxyphenylpropionic acid and 2,3-dihydroxicinnamic acid into 2-hydroxy-6-ketononadienedioate and 2-hydroxy-6-ketononatrienedioate, respectively. This is 2,3-dihydroxyphenylpropionate/2,3-dihydroxicinnamic acid 1,2-dioxygenase from Klebsiella pneumoniae subsp. pneumoniae (strain ATCC 700721 / MGH 78578).